Here is a 238-residue protein sequence, read N- to C-terminus: MAVSSLSIRCGGFSPTISHKTEILCPNPSLKACCLLSSGGKADSSESTYQKGSGNNWKRRQALVGVGTLVATSIPATLLLAEEIPKSYSPFVDREDGYSYYYPSDWREFDFRAHDSAFKDRYLQLQNVRVRFIPTEKNDIHEVGPMEEVVYDLVKHKFAAPNQVATIYDMKERVEDGKNYYTFEYGLRTPIYATTSFATVAVGNNRYYTLIVGANERRWRKVKKQLQVVADSLKILQI.

Belongs to the PsbP family. In terms of assembly, part of the chloroplast NDH complex, composed of a mixture of chloroplast and nucleus encoded subunits. Component of the NDH lumenal subcomplex, at least composed of PnsL1, PnsL2, PnsL3, PnsL4 and PnsL5.

Its subcellular location is the plastid. The protein localises to the chloroplast thylakoid membrane. In terms of biological role, NDH shuttles electrons from NAD(P)H:plastoquinone, via FMN and iron-sulfur (Fe-S) centers, to quinones in the photosynthetic chain and possibly in a chloroplast respiratory chain. The immediate electron acceptor for the enzyme in this species is believed to be plastoquinone. Couples the redox reaction to proton translocation, and thus conserves the redox energy in a proton gradient. Required for accumulation of the chloroplast NAD(P)H dehydrogenase (NDH) complex. The protein is Photosynthetic NDH subunit of lumenal location 1, chloroplastic of Arabidopsis thaliana (Mouse-ear cress).